The following is a 75-amino-acid chain: Brevinin-2SN1 (75 aa).

Residues 1–22 form the signal peptide; sequence MFTMKKPLLFLFFLGTISLSFC. The propeptide at 23–40 is removed in mature form; it reads EEERGADEDDEVEMTEEE. C69 and C75 are oxidised to a cystine.

This sequence belongs to the frog skin active peptide (FSAP) family. Brevinin subfamily. As to expression, expressed by the skin glands.

The protein localises to the secreted. Antimicrobial peptide. Active against some Gram-negative and a variety of Gram-positive bacterial strains. Active against fungus C.glabrata 090902 but not against C.albicans ATCC 10231. Shows hemolytic activity against human erythrocytes. In Sylvirana spinulosa (Fine-spined frog), this protein is Brevinin-2SN1.